A 156-amino-acid chain; its full sequence is Small ribosomal subunit protein uS7 (156 aa).

Belongs to the universal ribosomal protein uS7 family. Part of the 30S ribosomal subunit. Contacts proteins S9 and S11.

In terms of biological role, one of the primary rRNA binding proteins, it binds directly to 16S rRNA where it nucleates assembly of the head domain of the 30S subunit. Is located at the subunit interface close to the decoding center, probably blocks exit of the E-site tRNA. This is Small ribosomal subunit protein uS7 from Parvibaculum lavamentivorans (strain DS-1 / DSM 13023 / NCIMB 13966).